The chain runs to 115 residues: uncharacterized protein (115 aa).

Residues Met-1 to Thr-24 form the signal peptide. 2 helical membrane passes run Phe-39 to Ile-59 and Tyr-93 to Ser-113.

It is found in the membrane. This is an uncharacterized protein from Saccharomyces cerevisiae (strain ATCC 204508 / S288c) (Baker's yeast).